The sequence spans 334 residues: L-lactate dehydrogenase B chain (334 aa).

Gly30 to Lys58 serves as a coordination point for NAD(+). Positions 107, 139, and 170 each coordinate substrate. Asn139 contributes to the NAD(+) binding site. His194 serves as the catalytic Proton acceptor. Thr249 contacts substrate.

Belongs to the LDH/MDH superfamily. LDH family. In terms of assembly, homotetramer.

It localises to the cytoplasm. The enzyme catalyses (S)-lactate + NAD(+) = pyruvate + NADH + H(+). It functions in the pathway fermentation; pyruvate fermentation to lactate; (S)-lactate from pyruvate: step 1/1. In terms of biological role, interconverts simultaneously and stereospecifically pyruvate and lactate with concomitant interconversion of NADH and NAD(+). The sequence is that of L-lactate dehydrogenase B chain (ldhb) from Xenopus laevis (African clawed frog).